Here is a 172-residue protein sequence, read N- to C-terminus: RNA silencing suppressor p19 (172 aa).

The segment covering 1-20 (MERAIQGNDAREQANSERWD) has biased composition (basic and acidic residues). Positions 1-38 (MERAIQGNDAREQANSERWDGGSGSSTSPFQLPDESPS) are disordered.

The protein belongs to the tombusvirus protein p19 family. Homodimer.

Its function is as follows. Viral suppressor of RNA silencing which binds specifically to silencing RNAs (siRNAs). Acts as a molecular caliper to specifically select siRNAs based on the length of the duplex region of the RNA. The chain is RNA silencing suppressor p19 from Tomato bushy stunt virus (strain type) (TBSV).